The chain runs to 320 residues: o-succinylbenzoate synthase (320 aa).

Lys-133 acts as the Proton donor in catalysis. 3 residues coordinate Mg(2+): Asp-161, Glu-190, and Asp-213. Lys-235 (proton acceptor) is an active-site residue.

This sequence belongs to the mandelate racemase/muconate lactonizing enzyme family. MenC type 1 subfamily. The cofactor is a divalent metal cation.

The enzyme catalyses (1R,6R)-6-hydroxy-2-succinyl-cyclohexa-2,4-diene-1-carboxylate = 2-succinylbenzoate + H2O. The protein operates within quinol/quinone metabolism; 1,4-dihydroxy-2-naphthoate biosynthesis; 1,4-dihydroxy-2-naphthoate from chorismate: step 4/7. Its pathway is quinol/quinone metabolism; menaquinone biosynthesis. In terms of biological role, converts 2-succinyl-6-hydroxy-2,4-cyclohexadiene-1-carboxylate (SHCHC) to 2-succinylbenzoate (OSB). The polypeptide is o-succinylbenzoate synthase (Escherichia coli O139:H28 (strain E24377A / ETEC)).